Here is a 243-residue protein sequence, read N- to C-terminus: 1-(5-phosphoribosyl)-5-[(5-phosphoribosylamino)methylideneamino] imidazole-4-carboxamide isomerase (243 aa).

The Proton acceptor role is filled by aspartate 8. The Proton donor role is filled by aspartate 129.

This sequence belongs to the HisA/HisF family.

Its subcellular location is the cytoplasm. It carries out the reaction 1-(5-phospho-beta-D-ribosyl)-5-[(5-phospho-beta-D-ribosylamino)methylideneamino]imidazole-4-carboxamide = 5-[(5-phospho-1-deoxy-D-ribulos-1-ylimino)methylamino]-1-(5-phospho-beta-D-ribosyl)imidazole-4-carboxamide. It functions in the pathway amino-acid biosynthesis; L-histidine biosynthesis; L-histidine from 5-phospho-alpha-D-ribose 1-diphosphate: step 4/9. The protein is 1-(5-phosphoribosyl)-5-[(5-phosphoribosylamino)methylideneamino] imidazole-4-carboxamide isomerase of Carboxydothermus hydrogenoformans (strain ATCC BAA-161 / DSM 6008 / Z-2901).